The primary structure comprises 617 residues: V-type proton ATPase catalytic subunit A (617 aa).

Threonine 136 is subject to Phosphothreonine. Glycine 250–threonine 257 serves as a coordination point for ATP. A Phosphoserine; by AMPK modification is found at serine 384.

This sequence belongs to the ATPase alpha/beta chains family. V-ATPase is a heteromultimeric enzyme made up of two complexes: the ATP-hydrolytic V1 complex and the proton translocation V0 complex. The V1 complex consists of three catalytic AB heterodimers that form a heterohexamer, three peripheral stalks each consisting of EG heterodimers, one central rotor including subunits D and F, and the regulatory subunits C and H. The proton translocation complex V0 consists of the proton transport subunit a, a ring of proteolipid subunits c9c'', rotary subunit d, subunits e and f, and the accessory subunits ATP6AP1/Ac45 and ATP6AP2/PRR. Interacts with the V0 complex V-ATPase subunit a4 ATP6V0A4. Interacts with WFS1. Interacts with alpha-crystallin B chain/CRYAB and with MTOR, forming a ternary complex. Phosphorylation at Ser-384 by AMPK down-regulates its enzyme activity.

Its subcellular location is the cytoplasm. It is found in the cytosol. The protein resides in the cytoplasmic vesicle. The protein localises to the secretory vesicle. It localises to the clathrin-coated vesicle membrane. Its subcellular location is the lysosome. It catalyses the reaction ATP + H2O + 4 H(+)(in) = ADP + phosphate + 5 H(+)(out). Its activity is regulated as follows. ATP hydrolysis occurs at the interface between the nucleotide-binding domains of subunits A and B. ATP hydrolysis triggers a conformational change in the subunits D and F, which induces a shift of subunit d. The c-ring is subsequently rotated and results in a continuous proton translocation across the membrane. In terms of biological role, catalytic subunit of the V1 complex of vacuolar(H+)-ATPase (V-ATPase), a multisubunit enzyme composed of a peripheral complex (V1) that hydrolyzes ATP and a membrane integral complex (V0) that translocates protons. V-ATPase is responsible for acidifying and maintaining the pH of intracellular compartments and in some cell types, is targeted to the plasma membrane, where it is responsible for acidifying the extracellular environment. In aerobic conditions, involved in intracellular iron homeostasis, thus triggering the activity of Fe(2+) prolyl hydroxylase (PHD) enzymes, and leading to HIF1A hydroxylation and subsequent proteasomal degradation. May play a role in neurite development and synaptic connectivity. The protein is V-type proton ATPase catalytic subunit A (ATP6V1A) of Sus scrofa (Pig).